We begin with the raw amino-acid sequence, 343 residues long: uncharacterized protein (343 aa).

33–40 (GPKSSGKS) is a binding site for ATP.

The protein belongs to the archaeal ATPase family.

This is an uncharacterized protein from Methanocaldococcus jannaschii (strain ATCC 43067 / DSM 2661 / JAL-1 / JCM 10045 / NBRC 100440) (Methanococcus jannaschii).